The following is a 583-amino-acid chain: Pentatricopeptide repeat-containing protein At3g59040 (583 aa).

10 PPR repeats span residues 138–172, 173–207, 208–242, 246–280, 281–312, 313–347, 348–382, 383–417, 418–452, and 453–487; these read SEID…GSTP, NVIS…GPEP, SAIT…KKSP, DQKM…GVPQ, STVT…DIQP, DVVS…GVRP, THKA…RIFP, DLWS…GFEP, NIVT…GIKA, and NQTI…GVPP. Positions 525–583 are disordered; it reads VYGSDDDEEGVEDISSESSDDEDEGDDDDDDARETVLYDKPQEGSLGYGSLQTEELVGL. The segment covering 528 to 556 has biased composition (acidic residues); the sequence is SDDDEEGVEDISSESSDDEDEGDDDDDDA. Over residues 557 to 566 the composition is skewed to basic and acidic residues; the sequence is RETVLYDKPQ.

Belongs to the PPR family. P subfamily.

In Arabidopsis thaliana (Mouse-ear cress), this protein is Pentatricopeptide repeat-containing protein At3g59040.